A 219-amino-acid polypeptide reads, in one-letter code: Cytidylate kinase (219 aa).

An ATP-binding site is contributed by 9–17; the sequence is GPAGSGKTT.

The protein belongs to the cytidylate kinase family. Type 1 subfamily.

The protein resides in the cytoplasm. It carries out the reaction CMP + ATP = CDP + ADP. It catalyses the reaction dCMP + ATP = dCDP + ADP. This chain is Cytidylate kinase, found in Fervidobacterium nodosum (strain ATCC 35602 / DSM 5306 / Rt17-B1).